The chain runs to 468 residues: Intramembrane protease 2 (468 aa).

Residues 1–22 (MAEAATEIPPTASNVTVFTFEE) are Lumenal-facing. N-linked (GlcNAc...) asparagine glycosylation is present at Asn14. Residues 23 to 43 (QATSSLALYGMSILCIIIGSI) form a helical membrane-spanning segment. Topologically, residues 44 to 70 (RSAQYIRTNIDKKRLIEGSITMREARK) are cytoplasmic. Residues 71-91 (FPISASLVLFGLYLFFKPAAE) form a helical membrane-spanning segment. Residues 92 to 168 (RFLWVARVFQ…TNLPTIQKAE (77 aa)) lie on the Lumenal side of the membrane. Asn114 and Asn123 each carry an N-linked (GlcNAc...) asparagine glycan. The chain crosses the membrane as a helical span at residues 169-189 (CMQLLTFLICFEGVNAFASLL). Over 190–247 (KPFVTAFLKKMPLVPSFLRFNAPYLFSLKKGNKEMEEGDIEDAKKKETEYLFKIDFDR) the chain is Cytoplasmic. A helical membrane pass occupies residues 248–265 (YDIIALLMCSPILISHLL). Residues 266–267 (KR) are Lumenal-facing. A helical membrane pass occupies residues 268-284 (HWITNNIIGVSFSILGI). Over 285–296 (ERLHLASFKAGS) the chain is Cytoplasmic. Residues 297–317 (LLLVGLFFYDIFWVFGTDVMT) form a helical membrane-spanning segment. Asp306 is a catalytic residue. Topologically, residues 318 to 343 (SVAKGIDAPILLQFPQDIYRNGIMEA) are lumenal. A helical membrane pass occupies residues 344–364 (SKHSMLGLGDIVIPGIFIALL). Asp353 is an active-site residue. Residues 365–388 (RRFDYRVVQTTAESKAPQGSLKGR) are Cytoplasmic-facing. A helical membrane pass occupies residues 389–409 (YYFVVTVVAYMAGLFITMAVM). The Lumenal portion of the chain corresponds to 410-415 (HHFKAA). The chain crosses the membrane as a helical span at residues 416–436 (QPALLYLVPCCLFVPLLLAVI). The short motif at 417–419 (PAL) is the PAL element. At 437–468 (RGELSALWNYDESRHVDNEENRKKVDSGKKNN) the chain is on the cytoplasmic side.

The protein belongs to the peptidase A22B family.

The protein localises to the membrane. It is found in the endoplasmic reticulum membrane. Functionally, acts as intramembrane protease. In larvae, required for the complete shedding of the cuticle during molting, possibly by regulating cholesterol uptake via lrp-1. Involved in embryonic and larval development. The chain is Intramembrane protease 2 from Caenorhabditis elegans.